We begin with the raw amino-acid sequence, 304 residues long: Calcium release-activated calcium channel protein 1 (304 aa).

The segment covering 1-11 (MHPEPAPPPNN) has biased composition (pro residues). Residues 1 to 49 (MHPEPAPPPNNSNPELPLSGGSSTSGSRRSRRRSGDGEPTGAPPLPPPP) are disordered. Residues 1 to 88 (MHPEPAPPPN…KLYLSRAKLK (88 aa)) lie on the Cytoplasmic side of the membrane. The interval 3 to 49 (PEPAPPPNNSNPELPLSGGSSTSGSRRSRRRSGDGEPTGAPPLPPPP) is required for generation of inwardly rectifying CRAC currents. Residues 12-27 (SNPELPLSGGSSTSGS) show a composition bias toward low complexity. Residues 39–60 (PTGAPPLPPPPAVSYPDWIGQS) are AKAP5 association region. Residues 71-91 (SMQALSWRKLYLSRAKLKASS) are interaction with STIM1. The helical transmembrane segment at 89-106 (ASSRTSALLSGFAMVAMV) threads the bilayer. Residues 107–120 (EVQLDTDHDYPPGL) are Extracellular-facing. The helical transmembrane segment at 121-141 (LIVFSACTTVLVAVHLFALMI) threads the bilayer. Over 142–174 (STCILPNIEAVSNVHNLNSVKESPHERMHRHIE) the chain is Cytoplasmic. A helical membrane pass occupies residues 175-195 (LAWAFSTVIGTLLFLAEVVLL). At 196-237 (CWVKFLPLKRQAGQPSPTKPPTEPAVVVANSSNNGGITPGEA) the chain is on the extracellular side. An N-linked (GlcNAc...) asparagine glycan is attached at asparagine 225. A helical transmembrane segment spans residues 238 to 258 (AAIASTAIMVPCGLVFIVFAV). Residues 259 to 304 (HFYRSLVSHKTDRQFQELNELAEFARLQDQLDHRGDHSLTPGTHYA) are Cytoplasmic-facing. An interaction with STIM1 region spans residues 275 to 295 (ELNELAEFARLQDQLDHRGDH). Residue threonine 298 is modified to Phosphothreonine.

This sequence belongs to the Orai family. In terms of assembly, oligomerizes in homomeric and heteromeric ORAI complexes. Native CRAC channels most likely consist of hexameric ORAI heteromers, implying that diverse ORAI1, ORAI2 and ORAI3 subunit combinations with distinct biophysical properties can operate in a cell-type specific way. ARC channels are heteropentamers consisting of three ORAI1 and two ORAI3 subunits. Interacts with STIM1 and STIM2; this regulates channel activity. Interacts with CALM; this may displace STIM1 and STIM2 and might thereby modulate channel activity. Interacts (via N-terminus) with AKAP5 upon store depletion. Interacts with CRACR2A/EFCAB4B; the interaction is direct and takes place in absence of Ca(2+). Forms a complex with CRACR2A/EFCAB4B and STIM1 at low concentration of Ca(2+), the complex dissociates at elevated Ca(2+) concentrations. Interacts with ASPH (isoform 8). Interacts with SLC35G1. Interacts with UBQLN1. Interacts with ADCY8; interaction is calcium store depletion independent; interaction occurs in membrane raft; interaction increases markedly after store depletion; positively regulates SOCE-induced adenylate cyclase activity; contributes to the targeting of ADCY8 to discrete regions of the plasma membrane that are shielded from other calcium events. Interacts with EFHB; the interaction takes place upon Ca(2+)-store depletion. Interacts (via N- and C-termini) with ATP2C2 (via N-terminus); this interaction regulates Ca(2+) influx at the plasma membrane. Interacts with TSPAN18; this interaction regulates ORAI1 exit from the endoplasmic (ER), and/or Golgi, and trafficking to the cell surface. Post-translationally, N-glycosylated. N-glycosylation inhibits channel activity in T cells. In terms of processing, ubiquitinated. Cys-195 is oxidated, leading to inactivation of channel activity.

It localises to the cell membrane. The protein localises to the basolateral cell membrane. It catalyses the reaction Ca(2+)(in) = Ca(2+)(out). Its activity is regulated as follows. Oxidation at Cys-196 leads to inactivation of channel activity. Functionally, pore-forming subunit of two major inward rectifying Ca(2+) channels at the plasma membrane: Ca(2+) release-activated Ca(2+) (CRAC) channels and arachidonate-regulated Ca(2+)-selective (ARC) channels. Assembles with ORAI2 and ORAI3 to form hexameric CRAC channels that mediate Ca(2+) influx upon depletion of endoplasmic reticulum Ca(2+) store and channel activation by Ca(2+) sensor STIM1, a process known as store-operated Ca(2+) entry (SOCE). Various pore subunit combinations may account for distinct CRAC channel spatiotemporal and cell-type specific dynamics. ORAI1 mainly contributes to the generation of Ca(2+) plateaus involved in sustained Ca(2+) entry and is dispensable for cytosolic Ca(2+) oscillations, whereas ORAI2 and ORAI3 generate oscillatory patterns. CRAC channels assemble in Ca(2+) signaling microdomains where Ca(2+) influx is coupled to calmodulin and calcineurin signaling and activation of NFAT transcription factors recruited to ORAI1 via AKAP5. Activates NFATC2/NFAT1 and NFATC3/NFAT4-mediated transcriptional responses. CRAC channels are the main pathway for Ca(2+) influx in T cells and promote the immune response to pathogens by activating NFAT-dependent cytokine and chemokine transcription. Assembles with ORAI3 to form channels that mediate store-independent Ca(2+) influx in response to inflammatory metabolites arachidonate or its derivative leukotriene C4, termed ARC and LRC channels respectively. Plays a prominent role in Ca(2+) influx at the basolateral membrane of mammary epithelial cells independently of the Ca(2+) content of endoplasmic reticulum or Golgi stores. May mediate transepithelial transport of large quantities of Ca(2+) for milk secretion. The polypeptide is Calcium release-activated calcium channel protein 1 (Orai1) (Rattus norvegicus (Rat)).